The primary structure comprises 303 residues: Quinolinate synthase (303 aa).

Iminosuccinate-binding residues include His-24 and Ser-41. Cys-86 contributes to the [4Fe-4S] cluster binding site. Iminosuccinate contacts are provided by residues 112-114 (YVN) and Ser-129. A [4Fe-4S] cluster-binding site is contributed by Cys-172. Residues 198–200 (HPE) and Thr-215 contribute to the iminosuccinate site. Cys-260 is a binding site for [4Fe-4S] cluster.

This sequence belongs to the quinolinate synthase family. Type 2 subfamily. The cofactor is [4Fe-4S] cluster.

It localises to the cytoplasm. The enzyme catalyses iminosuccinate + dihydroxyacetone phosphate = quinolinate + phosphate + 2 H2O + H(+). It participates in cofactor biosynthesis; NAD(+) biosynthesis; quinolinate from iminoaspartate: step 1/1. Functionally, catalyzes the condensation of iminoaspartate with dihydroxyacetone phosphate to form quinolinate. This chain is Quinolinate synthase, found in Clostridium kluyveri (strain NBRC 12016).